The following is a 171-amino-acid chain: T-cell surface glycoprotein CD3 delta chain (171 aa).

Residues 1 to 21 (MEHSRFLSGLILAAFLSRVSP) form the signal peptide. Over 22–104 (YEVEMEELED…NCVELDSATL (83 aa)) the chain is Extracellular. An intrachain disulfide couples Cys37 to Cys72. N-linked (GlcNAc...) asparagine glycosylation is present at Asn38. The helical transmembrane segment at 105–125 (AGIIVTDIIATLLLALGVYCF) threads the bilayer. Topologically, residues 126-171 (AGHEMGRFSRAADTQDLLRNDQLYQPLRDRNDGQYSRLGENWARNK) are cytoplasmic. The ITAM domain occupies 138–166 (DTQDLLRNDQLYQPLRDRNDGQYSRLGEN). Phosphotyrosine occurs at positions 149 and 160.

As to quaternary structure, the TCR-CD3 complex is composed of a CD3D/CD3E and a CD3G/CD3E heterodimers that preferentially associate with TCRalpha and TCRbeta, respectively, to form TCRalpha/CD3E/CD3G and TCRbeta/CD3G/CD3E trimers. In turn, the hexamer interacts with CD3Z homodimer to form the TCR-CD3 complex. Alternatively, TCRalpha and TCRbeta can be replaced by TCRgamma and TCRdelta. Interacts with coreceptors CD4 and CD8. Phosphorylated on Tyr residues after T-cell receptor triggering by LCK in association with CD4/CD8. In terms of tissue distribution, CD3D is mostly present on T-lymphocytes with its TCR-CD3 partners. Present also in fetal NK-cells.

The protein localises to the cell membrane. Functionally, part of the TCR-CD3 complex present on T-lymphocyte cell surface that plays an essential role in adaptive immune response. When antigen presenting cells (APCs) activate T-cell receptor (TCR), TCR-mediated signals are transmitted across the cell membrane by the CD3 chains CD3D, CD3E, CD3G and CD3Z. All CD3 chains contain immunoreceptor tyrosine-based activation motifs (ITAMs) in their cytoplasmic domain. Upon TCR engagement, these motifs become phosphorylated by Src family protein tyrosine kinases LCK and FYN, resulting in the activation of downstream signaling pathways. In addition of this role of signal transduction in T-cell activation, CD3D plays an essential role in thymocyte differentiation. Indeed, participates in correct intracellular TCR-CD3 complex assembly and surface expression. In absence of a functional TCR-CD3 complex, thymocytes are unable to differentiate properly. Interacts with CD4 and CD8 and thus serves to establish a functional link between the TCR and coreceptors CD4 and CD8, which is needed for activation and positive selection of CD4 or CD8 T-cells. The chain is T-cell surface glycoprotein CD3 delta chain (CD3D) from Sus scrofa (Pig).